A 201-amino-acid chain; its full sequence is MDLISQNHNNRNPNTSLSTQTPSSFSSPPSSSRYENQKRRDWNTFCQYLRNHHPPLSLASCSGAHVLDFLRYLDQFGKTKVHHQNCAFFGLPNPPAPCPCPLRQAWGSLDALIGRLRAAYEENGGAPETSPFGSRSVRIFLREVRDFQAKSRGVSYEKKRKRVNNKQITQSQPQSQPPLPQQPQQEQGQSMMANYHHGATQ.

Positions M1–N14 are enriched in polar residues. 2 disordered regions span residues M1 to Q37 and S151 to Q201. The span at T15–S32 shows a compositional bias: low complexity. Residues R33–R160 enclose the ALOG domain. Positions K158–R162 match the Nuclear localization signal motif.

The protein belongs to the plant homeotic and developmental regulators ALOG protein family.

It is found in the nucleus. Its function is as follows. Probable transcription regulator that acts as a developmental regulator by promoting cell growth in response to light. The chain is Protein LIGHT-DEPENDENT SHORT HYPOCOTYLS 2 (LSH2) from Arabidopsis thaliana (Mouse-ear cress).